A 477-amino-acid polypeptide reads, in one-letter code: Mitochondrial adenyl nucleotide antiporter SLC25A24 (477 aa).

The tract at residues 1–174 (MHQLIRKFVF…RYWKKSTVLD (174 aa)) is regulatory N-terminal domain. The Mitochondrial intermembrane segment spans residues 1-198 (MHQLIRKFVF…EKTTGMWWKQ (198 aa)). The region spanning 20 to 55 (DNTKSFAELFEKLDVNKDGKVDVSELKTGLAAMGFS) is the EF-hand 1 domain. Ca(2+) is bound by residues D33, N35, D37, K39, E44, D69, D71, D73, E80, D100, N102, D104, R106, E111, D136, D138, T140, T142, and E147. 2 EF-hand domains span residues 87-122 (EHEK…LGIN) and 123-158 (LSDK…NPAE). The tract at residues 160-169 (LQQIIRYWKK) is linker region. Residues 175–477 (IGDSLTIPDE…YMRSGLGISK (303 aa)) form a C-terminal transmembrane transporter domain region. Solcar repeat units follow at residues 193–279 (GMWW…YKKL), 287–372 (VQSH…LKNT), and 384–472 (PGVL…MRSG). Residues 199–216 (LAAGGVAGAVSRTGTAPL) traverse the membrane as a helical segment. Residues 217 to 253 (DRMKVFMQVHSSKTNKISLVNGFKQMIKEGGVASLWR) lie on the Mitochondrial matrix side of the membrane. The chain crosses the membrane as a helical span at residues 254–273 (GNGVNVIKIAPETAIKFMAY). The Mitochondrial intermembrane portion of the chain corresponds to 274–296 (EQYKKLLSKDGGKVQSHERFMAG). Residues 297-310 (SLAGATAQTAIYPM) form a helical membrane-spanning segment. Topologically, residues 311-346 (EVMKTRLTLRKTGQYSGMFDCAKKILRKEGVKAFYK) are mitochondrial matrix. Residues 347–366 (GYVPNILGIIPYAGIDLAVY) traverse the membrane as a helical segment. Residues 367–389 (ETLKNTWLSHYAKDTANPGVLVL) are Mitochondrial intermembrane-facing. A helical membrane pass occupies residues 390 to 407 (LGCGTISSTCGQLASYPL). Topologically, residues 408–446 (ALIRTRMQAMASMEGSEQVSMSKLVKKIMQKEGFFGLYR) are mitochondrial matrix. The chain crosses the membrane as a helical span at residues 447–466 (GILPNFMKVIPAVSISYVVY). Residues 467–477 (EYMRSGLGISK) lie on the Mitochondrial intermembrane side of the membrane.

Belongs to the mitochondrial carrier (TC 2.A.29) family. As to quaternary structure, monomer.

The protein localises to the mitochondrion inner membrane. The enzyme catalyses Mg(2+)(out) + phosphate(in) + ATP(out) = Mg(2+)(in) + phosphate(out) + ATP(in). The catalysed reaction is ADP(out) + phosphate(in) + H(+)(out) = ADP(in) + phosphate(out) + H(+)(in). It catalyses the reaction AMP(out) + phosphate(in) = AMP(in) + phosphate(out). It carries out the reaction phosphate(in) + ATP(out) + 2 H(+)(out) = phosphate(out) + ATP(in) + 2 H(+)(in). The enzyme catalyses dADP(in) + ADP(out) = dADP(out) + ADP(in). The catalysed reaction is Mg(2+)(in) + ADP(out) + ATP(in) + H(+)(out) = Mg(2+)(out) + ADP(in) + ATP(out) + H(+)(in). It catalyses the reaction ADP(out) + diphosphate(in) = ADP(in) + diphosphate(out). It carries out the reaction dAMP(in) + ADP(out) + H(+)(out) = dAMP(out) + ADP(in) + H(+)(in). The enzyme catalyses 3'-AMP(in) + ADP(out) + H(+)(out) = 3'-AMP(out) + ADP(in) + H(+)(in). The catalysed reaction is dAMP(out) + phosphate(in) = dAMP(in) + phosphate(out). It catalyses the reaction 3'-AMP(out) + phosphate(in) = 3'-AMP(in) + phosphate(out). It carries out the reaction dADP(out) + phosphate(in) + H(+)(out) = dADP(in) + phosphate(out) + H(+)(in). Its activity is regulated as follows. Activated by an increase in cytosolic calcium levels that induce a conformational change of the N-terminal regulatory domain, uncapping the channel and allowing transport. Inhibited by bathophenanthroline, mersalyl, p-hydroxymercuribenzoate, bromcresol purple and tannic acid. In terms of biological role, electroneutral antiporter that mediates the transport of adenyl nucleotides through the inner mitochondrial membrane. Originally identified as an ATP-magnesium/inorganic phosphate antiporter, it also acts as a broad specificity adenyl nucleotide antiporter. By regulating the mitochondrial matrix adenyl nucleotide pool could adapt to changing cellular energetic demands and indirectly regulate adenyl nucleotide-dependent metabolic pathways. This is Mitochondrial adenyl nucleotide antiporter SLC25A24 (slc25a24) from Danio rerio (Zebrafish).